Consider the following 38-residue polypeptide: Photosystem II reaction center protein Y (38 aa).

Residues 1–4 are Lumenal-facing; that stretch reads MSMR. Residues 5 to 23 form a helical membrane-spanning segment; it reads LVVVLLPLGIALGWAVYNI. The Stromal segment spans residues 24–38; that stretch reads GKLAIEQWRRTGSKV.

The protein belongs to the PsbY family. As to quaternary structure, PSII is composed of 1 copy each of membrane proteins PsbA, PsbB, PsbC, PsbD, PsbE, PsbF, PsbH, PsbI, PsbJ, PsbK, PsbL, PsbM, PsbT, PsbX, PsbY, PsbZ, Psb30/Ycf12, at least 3 peripheral proteins of the oxygen-evolving complex and a large number of cofactors. It forms dimeric complexes.

It localises to the plastid. Its subcellular location is the cyanelle thylakoid membrane. In terms of biological role, loosely associated component of the core of photosystem II (PSII), it is not always seen in crystals. PSII is a light-driven water plastoquinone oxidoreductase, using light energy to abstract electrons from H(2)O, generating a proton gradient subsequently used for ATP formation. The chain is Photosystem II reaction center protein Y from Cyanophora paradoxa.